Reading from the N-terminus, the 345-residue chain is GMP reductase 1 (345 aa).

Residues serine 26–arginine 27, lysine 78, aspartate 129–alanine 131, and valine 180–glycine 181 each bind NADP(+). Glycine 181, glycine 183, and cysteine 186 together coordinate K(+). Cysteine 186 (thioimidate intermediate) is an active-site residue. Threonine 188 (proton donor/acceptor) is an active-site residue. Arginine 189 contacts K(+). Residues aspartate 219–glycine 221, glycine 242–glycine 243, glycine 268–serine 270, and arginine 286–glycine 290 each bind GMP. NADP(+) contacts are provided by residues methionine 269, tyrosine 285–arginine 286, and serine 314–threonine 317.

This sequence belongs to the IMPDH/GMPR family. GuaC type 1 subfamily. Homotetramer.

It catalyses the reaction IMP + NH4(+) + NADP(+) = GMP + NADPH + 2 H(+). Functionally, catalyzes the irreversible NADPH-dependent deamination of GMP to IMP. It functions in the conversion of nucleobase, nucleoside and nucleotide derivatives of G to A nucleotides, and in maintaining the intracellular balance of A and G nucleotides. This chain is GMP reductase 1 (GMPR), found in Homo sapiens (Human).